Reading from the N-terminus, the 280-residue chain is Virginiamycin B lyase (280 aa).

Histidine 215 provides a ligand contact to substrate. Glutamate 254 lines the Mg(2+) pocket. The Proton acceptor role is filled by histidine 256. Glutamate 271 serves as a coordination point for Mg(2+).

This sequence belongs to the Vgb family. In terms of assembly, monomer. It depends on Mg(2+) as a cofactor.

In terms of biological role, inactivates the type B streptogramin antibiotics by linearizing the lactone ring at the ester linkage, generating a free phenylglycine carboxylate and converting the threonyl moiety into 2-amino-butenoic acid. The sequence is that of Virginiamycin B lyase from Mycobacterium sp. (strain KMS).